Reading from the N-terminus, the 672-residue chain is METGRSRGGGAAVSERGGGARAGVCGRQEQAGALAADMDSHCECAAETPAAEPPSGKINKAAFKLFKKRKSGGTMPSIFGVKNKGDGKSSGPTGMVRSRTHDGLAEVLVLEGSKKEEPPGGSDHSGARPIPGPPKPSGPGLGSLASSSVAKSHSFFSLLKKNGRSETGKGDHAEASKAGGKQKRGLKGIFSSMRWHRRDKRGKEEEEKAVRAAGPGNLVLPGSLTASLECVKEEPPRAARRPDSPGQDASRHAAGEPAGGEQAPASAESAPERICLEAGSPTGSGDQSSRGEDAEGHRREEKPGAALESGAGEVQAAEDASKTGDVPIKTVPLVDSEGGSGRASAVPDPSSVDPPSDPSADRICLMFSDVTSLKSFDSLTGCGDIIADPEEEAGPSCDKHVPGPGKPVLSKKNASVVAYQGGGEEMASPDQVDDTYLPEFWDMLSQTEDQGQGTQEGAAKAATASDIKLAPETSSDTRCGEAAKDMSSVKRRRLHRIPIESQQKEEPKHPEKEHQEGVPNSDEGYWDSTTPGPEEESISNSSSSKKVVIPRDSDSGDALCDLYVEPEASPATLPATEDPPCLSRLKPVSPGTITCPLRTPGSLLKDSKIPISIKHLSNLPSSHPVVHQQPARSEVPRTKIPVSKVLVRRVSNRGLAGTTIRAAACHDSAKKL.

The span at 1–21 (METGRSRGGGAAVSERGGGAR) shows a compositional bias: gly residues. Disordered regions lie at residues 1–23 (METG…ARAG), 74–360 (TMPS…DPSA), and 443–560 (MLSQ…DALC). Positions 142–158 (GSLASSSVAKSHSFFSL) are enriched in low complexity. Phosphoserine is present on Ser-154. Composition is skewed to basic and acidic residues over residues 163-175 (GRSE…HAEA) and 201-210 (RGKEEEEKAV). Phosphoserine is present on residues Ser-223, Ser-227, and Ser-244. Residues 230 to 254 (CVKEEPPRAARRPDSPGQDASRHAA) are compositionally biased toward basic and acidic residues. Low complexity predominate over residues 255–269 (GEPAGGEQAPASAES). Ser-284 is modified (phosphoserine). The span at 289 to 303 (SRGEDAEGHRREEKP) shows a compositional bias: basic and acidic residues. Over residues 343–354 (ASAVPDPSSVDP) the composition is skewed to low complexity. 2 positions are modified to phosphoserine: Ser-356 and Ser-359. Over residues 446 to 457 (QTEDQGQGTQEG) the composition is skewed to low complexity. Basic and acidic residues-rich tracts occupy residues 478–488 (RCGEAAKDMSS) and 502–516 (QQKE…EHQE).

The protein belongs to the Amer family. As to quaternary structure, interacts with APC.

Its subcellular location is the cell membrane. Functionally, negative regulator of the canonical Wnt signaling pathway involved in neuroectodermal patterning. Acts by specifically binding phosphatidylinositol 4,5-bisphosphate (PtdIns(4,5)P2), translocating to the cell membrane and interacting with key regulators of the canonical Wnt signaling pathway, such as components of the beta-catenin destruction complex. The polypeptide is APC membrane recruitment protein 2 (Amer2) (Mus musculus (Mouse)).